A 351-amino-acid chain; its full sequence is Nicotinate-nucleotide--dimethylbenzimidazole phosphoribosyltransferase (351 aa).

Glutamate 319 acts as the Proton acceptor in catalysis.

It belongs to the CobT family.

The enzyme catalyses 5,6-dimethylbenzimidazole + nicotinate beta-D-ribonucleotide = alpha-ribazole 5'-phosphate + nicotinate + H(+). It functions in the pathway nucleoside biosynthesis; alpha-ribazole biosynthesis; alpha-ribazole from 5,6-dimethylbenzimidazole: step 1/2. In terms of biological role, catalyzes the synthesis of alpha-ribazole-5'-phosphate from nicotinate mononucleotide (NAMN) and 5,6-dimethylbenzimidazole (DMB). This chain is Nicotinate-nucleotide--dimethylbenzimidazole phosphoribosyltransferase, found in Desulforamulus reducens (strain ATCC BAA-1160 / DSM 100696 / MI-1) (Desulfotomaculum reducens).